The chain runs to 147 residues: Large ribosomal subunit protein uL15 (147 aa).

The tract at residues 1–42 (MTIKLHHLRPAPGAKTDKTRVGRGEGSKGKTAGRGTKGTKAR) is disordered. The segment covering 15-28 (KTDKTRVGRGEGSK) has biased composition (basic and acidic residues).

The protein belongs to the universal ribosomal protein uL15 family. Part of the 50S ribosomal subunit.

Functionally, binds to the 23S rRNA. This chain is Large ribosomal subunit protein uL15, found in Nocardia farcinica (strain IFM 10152).